Consider the following 182-residue polypeptide: KxDL motif-containing protein 1 (182 aa).

Low complexity predominate over residues 124 to 135 (TTTATSEQSTES). The interval 124–182 (TTTATSEQSTESCDTSPDVISPTISCCSEDPSQEHTDTPTSDSHEQPVLRDEGPDSADI) is disordered. Residues 155–176 (SQEHTDTPTSDSHEQPVLRDEG) show a composition bias toward basic and acidic residues.

Belongs to the KXD1 family. Associates with the BLOC-1 complex.

The protein resides in the lysosome membrane. Functionally, as part of a BORC-like complex may play a role in lysosomes movement and localization at the cell periphery. Associated with the cytosolic face of lysosomes, this complex may couple lysosomes to microtubule plus-end-directed kinesin motor. May also be involved in the biogenesis of lysosome-related organelles such as melanosomes. This is KxDL motif-containing protein 1 (kxd1) from Danio rerio (Zebrafish).